Here is a 325-residue protein sequence, read N- to C-terminus: Replication factor C small subunit (325 aa).

54–61 (GPAGTGKT) provides a ligand contact to ATP.

This sequence belongs to the activator 1 small subunits family. RfcS subfamily. In terms of assembly, heteromultimer composed of small subunits (RfcS) and large subunits (RfcL).

Its function is as follows. Part of the RFC clamp loader complex which loads the PCNA sliding clamp onto DNA. The sequence is that of Replication factor C small subunit from Haloarcula marismortui (strain ATCC 43049 / DSM 3752 / JCM 8966 / VKM B-1809) (Halobacterium marismortui).